Reading from the N-terminus, the 874-residue chain is Valine--tRNA ligase (874 aa).

Over residues 1 to 10 (MTENSQQQPP) the composition is skewed to polar residues. The tract at residues 1–23 (MTENSQQQPPASEPELPTQYAPA) is disordered. The 'HIGH' region signature appears at 57-67 (PNVTGSLHLGH). Residues 531-535 (KMSKS) carry the 'KMSKS' region motif. Residue Lys534 coordinates ATP. Residues 806–871 (IDIVAERKRL…ARIQAQLDRM (66 aa)) adopt a coiled-coil conformation.

It belongs to the class-I aminoacyl-tRNA synthetase family. ValS type 1 subfamily. In terms of assembly, monomer.

It localises to the cytoplasm. It carries out the reaction tRNA(Val) + L-valine + ATP = L-valyl-tRNA(Val) + AMP + diphosphate. Functionally, catalyzes the attachment of valine to tRNA(Val). As ValRS can inadvertently accommodate and process structurally similar amino acids such as threonine, to avoid such errors, it has a 'posttransfer' editing activity that hydrolyzes mischarged Thr-tRNA(Val) in a tRNA-dependent manner. The chain is Valine--tRNA ligase from Streptomyces avermitilis (strain ATCC 31267 / DSM 46492 / JCM 5070 / NBRC 14893 / NCIMB 12804 / NRRL 8165 / MA-4680).